The chain runs to 885 residues: Protein arg11, mitochondrial (885 aa).

The N-terminal 59 residues, 1-59, are a transit peptide targeting the mitochondrion; the sequence is MLIELQQIVKSGLVRNGAKHCTKRSLLCSNASVIASKRFQGSFAPGQQQPLNPLAKPIE. The region spanning 346–499 is the N-acetyltransferase domain; that stretch reads FVINKHDSLD…SDKPFADAII (154 aa). The segment covering 503 to 523 has biased composition (low complexity); that stretch reads STKPPTASSTTNNPSSSQINQ. The disordered stretch occupies residues 503 to 532; it reads STKPPTASSTTNNPSSSQINQKRSYSTSSL. The active site involves Cys-703.

The protein in the N-terminal section; belongs to the acetylglutamate kinase family. This sequence in the C-terminal section; belongs to the NAGSA dehydrogenase family. Post-translationally, the protein precursor is probably cleaved into the two biologically active enzymes, the kinase and the reductase.

It localises to the mitochondrion. It catalyses the reaction N-acetyl-L-glutamate 5-semialdehyde + phosphate + NADP(+) = N-acetyl-L-glutamyl 5-phosphate + NADPH + H(+). The enzyme catalyses N-acetyl-L-glutamate + ATP = N-acetyl-L-glutamyl 5-phosphate + ADP. Its pathway is amino-acid biosynthesis; L-arginine biosynthesis; N(2)-acetyl-L-ornithine from L-glutamate: step 2/4. It functions in the pathway amino-acid biosynthesis; L-arginine biosynthesis; N(2)-acetyl-L-ornithine from L-glutamate: step 3/4. Its activity is regulated as follows. The kinase activity is inhibited by arginine. This Schizosaccharomyces pombe (strain 972 / ATCC 24843) (Fission yeast) protein is Protein arg11, mitochondrial (arg11).